The following is a 368-amino-acid chain: MVQAPLSPSLLQTQSISQPPQETEALKAWLEELTQKIIEGDRINKSEALTLTQIEGQDSILLLCEAADRIRQACCGNVVDLCSIINIKSGNCSENCRFCSQSVYHPGENSPIYGLKSSEEILAQAKAAEAAGAKRFCLVSQGRGPKYQGAKSKEFEQILATVRQIAAETSIKPCCALGEVTPEQAQALREAGVTRYNHNLEASEGFYPEIVTSHSWRDRVETIKNLKAAGIQACSGGIMGMGETWEDRVDLALALRELGVESVPINLLNPREGTPLGDCHRLDPFEALKAIAIFRLILPQQILRYAGGREAIMGDLQSLGLKSGINAMLIGHYLTTLGQPPEKDLAMVESLGLQGGEAPIPGEYQTRS.

A Radical SAM core domain is found at 74–309 (CCGNVVDLCS…QQILRYAGGR (236 aa)). [4Fe-4S] cluster-binding residues include C92, C96, and C99. [2Fe-2S] cluster-binding residues include C137, C174, C234, and R304.

Belongs to the radical SAM superfamily. Biotin synthase family. Homodimer. [4Fe-4S] cluster serves as cofactor. [2Fe-2S] cluster is required as a cofactor.

The catalysed reaction is (4R,5S)-dethiobiotin + (sulfur carrier)-SH + 2 reduced [2Fe-2S]-[ferredoxin] + 2 S-adenosyl-L-methionine = (sulfur carrier)-H + biotin + 2 5'-deoxyadenosine + 2 L-methionine + 2 oxidized [2Fe-2S]-[ferredoxin]. It functions in the pathway cofactor biosynthesis; biotin biosynthesis; biotin from 7,8-diaminononanoate: step 2/2. Functionally, catalyzes the conversion of dethiobiotin (DTB) to biotin by the insertion of a sulfur atom into dethiobiotin via a radical-based mechanism. This chain is Biotin synthase, found in Rippkaea orientalis (strain PCC 8801 / RF-1) (Cyanothece sp. (strain PCC 8801)).